The following is a 200-amino-acid chain: Ubiquitin-conjugating enzyme E2 K (200 aa).

Ala2 bears the N-acetylalanine mark. In terms of domain architecture, UBC core spans 4–154 (IAVQRIKREF…ARLWAHVYAG (151 aa)). Lys14 is modified (N6-acetyllysine; alternate). Lys14 is covalently cross-linked (Glycyl lysine isopeptide (Lys-Gly) (interchain with G-Cter in SUMO); alternate). Residue Lys14 forms a Glycyl lysine isopeptide (Lys-Gly) (interchain with G-Cter in SUMO1); alternate linkage. The active-site Glycyl thioester intermediate is the Cys92. Ser159 carries the phosphoserine modification. The 41-residue stretch at 160-200 (PEYTKKIENLCAMGFDRNAVIVALSSKSWDVETATELLLSN) folds into the UBA domain.

The protein belongs to the ubiquitin-conjugating enzyme family. Interacts with RNF138/NARF. Interacts with BRCA1. In terms of processing, sumoylation at Lys-14 impairs catalytic activity.

Its subcellular location is the cytoplasm. The enzyme catalyses S-ubiquitinyl-[E1 ubiquitin-activating enzyme]-L-cysteine + [E2 ubiquitin-conjugating enzyme]-L-cysteine = [E1 ubiquitin-activating enzyme]-L-cysteine + S-ubiquitinyl-[E2 ubiquitin-conjugating enzyme]-L-cysteine.. The protein operates within protein modification; protein ubiquitination. Its function is as follows. Accepts ubiquitin from the E1 complex and catalyzes its covalent attachment to other proteins. In vitro, in the presence or in the absence of BRCA1-BARD1 E3 ubiquitin-protein ligase complex, catalyzes the synthesis of 'Lys-48'-linked polyubiquitin chains. Does not transfer ubiquitin directly to but elongates monoubiquitinated substrate protein. Mediates the selective degradation of short-lived and abnormal proteins, such as the endoplasmic reticulum-associated degradation (ERAD) of misfolded lumenal proteins. Ubiquitinates huntingtin. May mediate foam cell formation by the suppression of apoptosis of lipid-bearing macrophages through ubiquitination and subsequence degradation of p53/TP53. Proposed to be involved in ubiquitination and proteolytic processing of NF-kappa-B; in vitro supports ubiquitination of NFKB1. The sequence is that of Ubiquitin-conjugating enzyme E2 K (UBE2K) from Bos taurus (Bovine).